Here is a 253-residue protein sequence, read N- to C-terminus: Phosphate import ATP-binding protein PstB (253 aa).

The ABC transporter domain occupies 1–249 (MKLMDVRVSG…PRHELTKKFL (249 aa)). ATP is bound at residue 38–45 (GPSGSGKS).

Belongs to the ABC transporter superfamily. Phosphate importer (TC 3.A.1.7) family. In terms of assembly, the complex is composed of two ATP-binding proteins (PstB), two transmembrane proteins (PstC and PstA) and a solute-binding protein (PstS).

It is found in the cell membrane. It catalyses the reaction phosphate(out) + ATP + H2O = ADP + 2 phosphate(in) + H(+). In terms of biological role, part of the ABC transporter complex PstSACB involved in phosphate import. Responsible for energy coupling to the transport system. In Aeropyrum pernix (strain ATCC 700893 / DSM 11879 / JCM 9820 / NBRC 100138 / K1), this protein is Phosphate import ATP-binding protein PstB.